Here is a 91-residue protein sequence, read N- to C-terminus: Small ribosomal subunit protein uS19 (91 aa).

It belongs to the universal ribosomal protein uS19 family.

Protein S19 forms a complex with S13 that binds strongly to the 16S ribosomal RNA. The sequence is that of Small ribosomal subunit protein uS19 from Fusobacterium nucleatum subsp. nucleatum (strain ATCC 25586 / DSM 15643 / BCRC 10681 / CIP 101130 / JCM 8532 / KCTC 2640 / LMG 13131 / VPI 4355).